We begin with the raw amino-acid sequence, 199 residues long: Crossover junction endodeoxyribonuclease RuvC (199 aa).

Residues Asp17, Glu76, and Asp148 contribute to the active site. Mg(2+)-binding residues include Asp17, Glu76, and Asp148.

This sequence belongs to the RuvC family. In terms of assembly, homodimer which binds Holliday junction (HJ) DNA. The HJ becomes 2-fold symmetrical on binding to RuvC with unstacked arms; it has a different conformation from HJ DNA in complex with RuvA. In the full resolvosome a probable DNA-RuvA(4)-RuvB(12)-RuvC(2) complex forms which resolves the HJ. Mg(2+) is required as a cofactor.

Its subcellular location is the cytoplasm. It catalyses the reaction Endonucleolytic cleavage at a junction such as a reciprocal single-stranded crossover between two homologous DNA duplexes (Holliday junction).. Its function is as follows. The RuvA-RuvB-RuvC complex processes Holliday junction (HJ) DNA during genetic recombination and DNA repair. Endonuclease that resolves HJ intermediates. Cleaves cruciform DNA by making single-stranded nicks across the HJ at symmetrical positions within the homologous arms, yielding a 5'-phosphate and a 3'-hydroxyl group; requires a central core of homology in the junction. The consensus cleavage sequence is 5'-(A/T)TT(C/G)-3'. Cleavage occurs on the 3'-side of the TT dinucleotide at the point of strand exchange. HJ branch migration catalyzed by RuvA-RuvB allows RuvC to scan DNA until it finds its consensus sequence, where it cleaves and resolves the cruciform DNA. This is Crossover junction endodeoxyribonuclease RuvC from Mannheimia succiniciproducens (strain KCTC 0769BP / MBEL55E).